A 129-amino-acid chain; its full sequence is MAGRGKGKTAGKKAVSRSAKAGLQFPVGRIARYLKKGKYAERIGAGAPVYLAAVLEYLTAEVLELAGNAARDNKKNRIVPRHIQLAIRNDEELGKLLGDVTIASGGVLPNIHAVLLPKKSKGGKGEEAA.

It belongs to the histone H2A family. As to quaternary structure, the nucleosome is a histone octamer containing two molecules each of H2A, H2B, H3 and H4 assembled in one H3-H4 heterotetramer and two H2A-H2B heterodimers. The octamer wraps approximately 147 bp of DNA.

It localises to the nucleus. The protein resides in the chromosome. In terms of biological role, core component of nucleosome. Nucleosomes wrap and compact DNA into chromatin, limiting DNA accessibility to the cellular machineries which require DNA as a template. Histones thereby play a central role in transcription regulation, DNA repair, DNA replication and chromosomal stability. DNA accessibility is regulated via a complex set of post-translational modifications of histones, also called histone code, and nucleosome remodeling. In Volvox carteri (Green alga), this protein is Histone H2A-III.